The following is a 311-amino-acid chain: Meiotically up-regulated gene 146 protein (311 aa).

It is found in the cytoplasm. Its subcellular location is the nucleus. Functionally, has a role in sporulation. The sequence is that of Meiotically up-regulated gene 146 protein (mug146) from Schizosaccharomyces pombe (strain 972 / ATCC 24843) (Fission yeast).